The sequence spans 565 residues: DNA-dependent metalloprotease SPRTN (565 aa).

The SprT-like domain occupies 23–130; sequence RALFLEFNDT…RTGANISVYH (108 aa). Histidine 88 contributes to the Zn(2+) binding site. Glutamate 89 is a catalytic residue. Residues histidine 92 and histidine 107 each coordinate Zn(2+). Residues 191–219 are disordered; it reads EPENYPQKRKRKNDPTISEVNSSSHVKGK. Residues 205–215 are compositionally biased toward polar residues; sequence PTISEVNSSSH. Positions 231-239 match the SHP-box motif; the sequence is FSGTGYKLF. The short motif at 288-295 is the PIP-box element; that stretch reads STPAQSIL. A disordered region spans residues 349–389; it reads TLPSPSIQSTSQKPQKDISFGFTLPSQSFPSTSPGSNSENK. 2 stretches are compositionally biased toward polar residues: residues 351–361 and 372–386; these read PSPSIQSTSQK and LPSQ…GSNS. The UBZ4-type 1 zinc-finger motif lies at 436-463; it reads KVSCPVCGTEVLECKINDHLDTCTSSGP. Cysteine 439, cysteine 442, histidine 454, and cysteine 458 together coordinate Zn(2+). A Nuclear localization signal motif is present at residues 476-499; the sequence is QSFPSTSQGSNSAIKEPLYKKLQI. The UBZ4-type 2 zinc finger occupies 537–564; that stretch reads KVCCPVCGTDVLQDKINDHLDTCLQNCN. Residues cysteine 540, cysteine 543, histidine 555, and cysteine 559 each contribute to the Zn(2+) site.

This sequence belongs to the Spartan family. As to quaternary structure, homodimer. Requires Zn(2+) as cofactor. Autocatalytically cleaved in response to double-stranded DNA-binding: autocatalytic cleavage takes place in trans and leads to inactivation.

Its subcellular location is the nucleus. The protein resides in the chromosome. With respect to regulation, DNA-binding activates the protease activity: single-stranded DNA-binding specifically activates ability to cleave covalent DNA-protein cross-links (DPCs). In contrast, double-stranded DNA-binding specifically activates autocatalytic cleavage, and subsequent inactivation. DNA-dependent metalloendopeptidase that mediates the proteolytic cleavage of covalent DNA-protein cross-links (DPCs) during DNA synthesis, thereby playing a key role in maintaining genomic integrity. DPCs are highly toxic DNA lesions that interfere with essential chromatin transactions, such as replication and transcription, and which are induced by reactive agents, such as UV light or formaldehyde. Associates with the DNA replication machinery and specifically removes DPCs during DNA synthesis. Catalyzes proteolytic cleavage of the hmces DNA-protein cross-link following unfolding by the brip1/fancj helicase. Acts as a pleiotropic protease for DNA-binding proteins cross-linked with DNA, such as top1, top2a, histones H3 and H4. Mediates degradation of DPCs that are not ubiquitinated, while it is not able to degrade ubiquitinated DPCs. SPRTN activation requires polymerase collision with DPCs followed by helicase bypass of DPCs. May also act as a 'reader' of ubiquitinated pcna: facilitates chromatin association of rad18 and is required for efficient pcna monoubiquitination, promoting a feed-forward loop to enhance pcna ubiquitination and translesion DNA synthesis. Acts as a regulator of translesion DNA synthesis by recruiting vcp/p97 to sites of DNA damage. The chain is DNA-dependent metalloprotease SPRTN from Xenopus laevis (African clawed frog).